Consider the following 178-residue polypeptide: Conodipine-P1 (178 aa).

Positions methionine 1–serine 24 are cleaved as a signal peptide. 3 positions are modified to 4-hydroxyproline; partial: proline 38, proline 42, and proline 49. Residue histidine 54 is part of the active site. Residues lysine 98–arginine 130 constitute a propeptide, interchain peptide. A Pyrrolidone carboxylic acid modification is found at glutamine 131. Position 137 is a 4-hydroxyproline; partial (proline 137).

Belongs to the phospholipase A2 family. Group IX subfamily. In terms of assembly, heterodimer of an alpha and a beta chain; probably disulfide-linked. The cofactor is Ca(2+). Expressed by the venom duct.

Its subcellular location is the secreted. It carries out the reaction a 1,2-diacyl-sn-glycero-3-phosphocholine + H2O = a 1-acyl-sn-glycero-3-phosphocholine + a fatty acid + H(+). In terms of biological role, catalyzes the calcium-dependent hydrolysis of the 2-acyl groups in 3-sn-phosphoglycerides. The sequence is that of Conodipine-P1 from Conus purpurascens (Purple cone).